The chain runs to 107 residues: uncharacterized protein (107 aa).

Residues 34 to 107 adopt a coiled-coil conformation; the sequence is FASKDKKDEK…SDNQKKDMSY (74 aa).

This is an uncharacterized protein from Dictyostelium discoideum (Social amoeba).